The sequence spans 335 residues: Ficolin-1 (335 aa).

The N-terminal stretch at 1-17 (MWWPMLWAFPVLLCLCS) is a signal peptide. The interval 47 to 114 (SCPSFPGPPG…TASPLGQKEL (68 aa)) is disordered. A Collagen-like domain is found at 50 to 88 (SFPGPPGPKGEPGSPAGRGERGLQGSPGKMGPPGSKGEP). A compositionally biased stretch (low complexity) spans 75–88 (SPGKMGPPGSKGEP). The Fibrinogen C-terminal domain occupies 117 to 335 (ALCRRGPRSC…KVAEMKIRAS (219 aa)). 2 disulfide bridges follow: cysteine 119-cysteine 147 and cysteine 126-cysteine 154. The segment at 123–162 (PRSCKDLLTRGIFLTGWYTIYLPDCRPLTVLCDMDVDGGG) is a domain; contributes to trimerization. The tract at residues 163–251 (WTVFQRRVDG…LTLGQFLEGT (89 aa)) is b domain; contributes to trimerization. Ca(2+) is bound at residue aspartate 270. Asparagine 271 is a glycosylation site (N-linked (GlcNAc...) asparagine). Residue aspartate 272 participates in Ca(2+) binding. A disulfide bond links cysteine 279 and cysteine 292. 291 to 293 (DCH) contributes to the a carbohydrate binding site. Residues 326–335 (KVAEMKIRAS) are p domain.

Belongs to the ficolin lectin family. Homotrimer. Interacts with elastin/ELN. Interacts (via Fibrinogen C-terminal domain) with FFAR2. Interacts with CRP; may regulate monocyte activation by FCN1.

The protein localises to the secreted. Its subcellular location is the cell membrane. In terms of biological role, extracellular lectin functioning as a pattern-recognition receptor in innate immunity. Binds the sugar moieties of pathogen-associated molecular patterns (PAMPs) displayed on microbes and activates the lectin pathway of the complement system. May also activate monocytes through a G protein-coupled receptor, FFAR2, inducing the secretion of interleukin-8/IL-8. Binds preferentially to 9-O-acetylated 2-6-linked sialic acid derivatives and to various glycans containing sialic acid engaged in a 2-3 linkage. This Rattus norvegicus (Rat) protein is Ficolin-1 (Fcn1).